The sequence spans 892 residues: Alanine--tRNA ligase (892 aa).

His580, His584, Cys682, and His686 together coordinate Zn(2+).

The protein belongs to the class-II aminoacyl-tRNA synthetase family. Zn(2+) serves as cofactor.

It is found in the cytoplasm. The enzyme catalyses tRNA(Ala) + L-alanine + ATP = L-alanyl-tRNA(Ala) + AMP + diphosphate. Catalyzes the attachment of alanine to tRNA(Ala) in a two-step reaction: alanine is first activated by ATP to form Ala-AMP and then transferred to the acceptor end of tRNA(Ala). Also edits incorrectly charged Ser-tRNA(Ala) and Gly-tRNA(Ala) via its editing domain. This Salinispora tropica (strain ATCC BAA-916 / DSM 44818 / JCM 13857 / NBRC 105044 / CNB-440) protein is Alanine--tRNA ligase.